The following is a 1043-amino-acid chain: Chitin synthase 2 (1043 aa).

The span at 1–10 (MAQESSNMDQ) shows a compositional bias: polar residues. 2 disordered regions span residues 1 to 133 (MAQE…PRRP) and 215 to 234 (ESDF…ERRG). Residues 11–21 (SKSDNVTDNKP) show a composition bias toward basic and acidic residues. Low complexity predominate over residues 43–58 (SASTSSLPTSRPSSSP). Composition is skewed to polar residues over residues 59 to 73 (GQSP…TSDT) and 81 to 93 (VSPT…SRGS). Transmembrane regions (helical) follow at residues 663–683 (FVSL…FYFI), 703–723 (IFAI…VLSM), 738–758 (MIIY…MVVM), 780–800 (YIIV…FLYL), 907–927 (YMVS…SEAF), and 931–951 (SVGN…LAVF).

The protein belongs to the chitin synthase family. Class II subfamily.

It localises to the cell membrane. It carries out the reaction [(1-&gt;4)-N-acetyl-beta-D-glucosaminyl](n) + UDP-N-acetyl-alpha-D-glucosamine = [(1-&gt;4)-N-acetyl-beta-D-glucosaminyl](n+1) + UDP + H(+). Its function is as follows. Polymerizes chitin, a structural polymer of the cell wall and septum, by transferring the sugar moiety of UDP-GlcNAc to the non-reducing end of the growing chitin polymer. This chain is Chitin synthase 2 (CHS2), found in Paracoccidioides brasiliensis.